The following is a 410-amino-acid chain: L-sorbose 1-phosphate reductase (410 aa).

Zn(2+) is bound by residues Cys40, His69, and Glu70. Residues Arg221 and 309–310 contribute to the NAD(+) site; that span reads GT.

It belongs to the zinc-containing alcohol dehydrogenase family. Zn(2+) serves as cofactor.

Its function is as follows. Reduces L-sorbose 1-phosphate to D-glucitol 6-phosphate. The protein is L-sorbose 1-phosphate reductase (sorE) of Klebsiella pneumoniae.